A 920-amino-acid polypeptide reads, in one-letter code: MCVVRTFWFAVLTVIFAVSCSSHSVIENDKPTSLKVGEGFVNPLGYYEASPRFSWKPSISNSKSTQQSAYQIQVSSTPEGLLTNPDKWDSEKIKSSAMSWVQYKGKKITSREKVFWRVRFWDENNIASQWSDVAHIEMGLLENLDWKASWIGAKDTESSLSPSQSTLATPQYLRTQFSVEKEVLEARLYVTAKGVFKVYLNGKDITANDALPPGWTPYEKRIETLTYDVTTLITKRDNALGAIIAGGWYSGRIADLKETDHSKPPRFLAQLEITYSDNTTRLVTTNDSWKATQSGPIRFASNYDGERYDETYEMQGWSMPDYDDSEWGTVITDASTPGTLLRPKRHLPVRNVDKLTPLSFKQVSKDTVIFDFGQNMVGVPSIKLPVKQGKQVTLRFAEALHKGDFYTDNYRSAHSTDYFLPAKDGIAEYTPTFTFHGFRFVEISGFDETKAPVKNWIVANVQHSDIDLYNNFLSANPKLNKLFENINWGLKGNFFDIPLDCPQRDERLGWTGDANAFIAPSMYMADVYGFWSAYLNSLREEQTEDGFVPLYVPFVKWINWTSSGWGDAATILPWELYMMTGDQKILEDSYPSMKSWINYHDSQAKNNISSMMTFGDWLQPYPEAEGKGANRGDTDFSLISTAFFARSVALTRKTALELGFNEDAKRYEVKQKTLAKAFRAEFFDEDLNVIKGKETQTAYLLALAFDLLPQSEVNIAQTKLISLLQSADTHLRTGFLGTPLLADVLQEAGRTDLVYELLFKETYPSWFYSINNGATTTWERWNSYSLEEGFNPQGMNSLNHYAYGTISRWFYEGILGVKPQLPGFKKAIISPQLTSKLGFAEGSIPTPSGDIDVSWTMTSDGFDVSVTVPFNISAEFVPPAHYSVVAATNAKNEPIKKWKGLKAGQYQFQLIIDEKHGGAQ.

An N-terminal signal peptide occupies residues Met1–Ser19. Cys20 is lipidated: N-palmitoyl cysteine. Cys20 carries the S-diacylglycerol cysteine lipid modification. Alpha-L-rhamnose is bound by residues Asp500, Arg504–Glu506, Asp513, and Trp565. The active-site Proton donor is the Glu506. Residue Glu779 is the Proton acceptor of the active site. His800 lines the alpha-L-rhamnose pocket.

The protein belongs to the glycosyl hydrolase 78 family.

The protein resides in the cell membrane. The catalysed reaction is Hydrolysis of terminal non-reducing alpha-L-rhamnose residues in alpha-L-rhamnosides.. Its function is as follows. Alpha-L-rhamnosidase involved in ulvan degradation. Ulvan is the main polysaccharide component of the Ulvales (green seaweed) cell wall. It is composed of disaccharide building blocks comprising 3-sulfated rhamnose (Rha3S) linked to D-glucuronic acid (GlcA), L-iduronic acid (IduA), or D-xylose (Xyl). The enzyme is able to degrade p-nitrophenyl-alpha-L-rhamnopyranoside (PNP-Rha) in vitro. Incubating the enzyme with the products obtained after degradation with ulvan lyase and beta-glucuronyl hydrolase (i.e. the trisaccharides beta-alpha-L-Rha3S-IduA-Rha3S and beta-alpha-L-Rha3S-GlcA-Rha3S) showed no degradation, suggesting that the enzyme is active on neutral rhamnose and that desulfation of the oligosaccharide must be achieved before cleavage of rhamnose. The sequence is that of Alpha-L-rhamnosidase from Alteromonas sp. (strain LOR).